We begin with the raw amino-acid sequence, 123 residues long: UPF0102 protein Maqu_2464 (123 aa).

It belongs to the UPF0102 family.

The protein is UPF0102 protein Maqu_2464 of Marinobacter nauticus (strain ATCC 700491 / DSM 11845 / VT8) (Marinobacter aquaeolei).